Reading from the N-terminus, the 428-residue chain is MTSSRLPVLLALVFSSLSPVLSHSNREMWFQDLFPPNTCPINAKTKTFYGIMFDAGSTGTRIHIYTFVQKSPEILPELEGEIFESVKPGLSAYADQPEKGAESVKRLLDMAIDAVPPHLWKKTPVVLKATAGLRLLSEEKAQALLSEVKEVFEESPFLVPEDSVSIMDGSYEGILAWITVNFLTGQLSGQNQHTVGTLDLGGASTQITFLPRFEETLKESPTDFLTSFEMFNSTYKLYTHSYLGFGLKAARLATLGALNTEVADRQMFRSSCLPKQLEAEWHFGGVKYRYGGNKEGETGFKPCYLEVLKVVKGKLHQPDEIRGSSFYAFSYYYDRAADTNLIDYEQGGVLEVRDFERKAKEVCDNMERFSSASPFLCMDLTYITALLKEGFGFRDNTLLQLTKKVNNIETSWTLGATFHLLQSLGITY.

Residues 1 to 24 (MTSSRLPVLLALVFSSLSPVLSHS) form the signal peptide. Glutamate 172 (proton acceptor) is an active-site residue. N-linked (GlcNAc...) asparagine glycosylation occurs at asparagine 232. 2 disulfide bridges follow: cysteine 272-cysteine 303 and cysteine 363-cysteine 377.

Belongs to the GDA1/CD39 NTPase family. Monomer; active form. Homodimer; disulfide-linked. Homodimers are enzymatically inactive. It depends on Ca(2+) as a cofactor. The cofactor is Mg(2+).

It is found in the endoplasmic reticulum. The protein localises to the secreted. The enzyme catalyses a ribonucleoside 5'-diphosphate + H2O = a ribonucleoside 5'-phosphate + phosphate + H(+). It carries out the reaction GDP + H2O = GMP + phosphate + H(+). The catalysed reaction is UDP + H2O = UMP + phosphate + H(+). It catalyses the reaction IDP + H2O = IMP + phosphate + H(+). The enzyme catalyses CDP + H2O = CMP + phosphate + H(+). It carries out the reaction ADP + H2O = AMP + phosphate + H(+). It participates in protein modification; protein glycosylation. Hydrolyzes nucleoside diphosphates with a preference for GDP, IDP and UDP compared to ADP and CDP. In the lumen of the endoplasmic reticulum, hydrolyzes UDP that acts as an end-product feedback inhibitor of the UDP-Glc:glycoprotein glucosyltransferases. UMP can be transported back by an UDP-sugar antiporter to the cytosol where it is consumed to regenerate UDP-glucose. Therefore, it positively regulates protein reglucosylation by clearing UDP from the ER lumen and by promoting the regeneration of UDP-glucose. Protein reglucosylation is essential to proper glycoprotein folding and quality control in the ER. This is Ectonucleoside triphosphate diphosphohydrolase 5 (ENTPD5) from Gallus gallus (Chicken).